We begin with the raw amino-acid sequence, 162 residues long: Putative ripening-related protein 7 (162 aa).

The signal sequence occupies residues 1–30 (MAAAAASTKIVAVVVAVLLAILEMPSCAVA).

It belongs to the kiwellin family.

Its subcellular location is the secreted. This Oryza sativa subsp. japonica (Rice) protein is Putative ripening-related protein 7.